Consider the following 210-residue polypeptide: Probable GTP-binding protein EngB (210 aa).

In terms of domain architecture, EngB-type G spans T25 to E199. GTP contacts are provided by residues G33–S40, G60–L64, D78–G81, T145–D148, and F178–S180. Mg(2+) is bound by residues S40 and T62.

It belongs to the TRAFAC class TrmE-Era-EngA-EngB-Septin-like GTPase superfamily. EngB GTPase family. The cofactor is Mg(2+).

Necessary for normal cell division and for the maintenance of normal septation. In Shigella flexneri, this protein is Probable GTP-binding protein EngB.